The chain runs to 213 residues: MVERTILEAVKKVIEESPKRNFSESVDLAINLKNLDMNQPKNRVDEEVILPHGLGKELKIGVFAKGDVGLRAKAAGAAYVISDVELEELAADKNKARVLANECDLFIAETQFMPIIGKNLGIVLGPRGKMPIPLMPNKDIGELIQSKQNAVKLRSKDRLTFHVAVGRRNMNPDDLSENIETIMSRLERVLDKGKHNLRSVYVTTTMGKSERVV.

The protein belongs to the universal ribosomal protein uL1 family. As to quaternary structure, part of the 50S ribosomal subunit.

In terms of biological role, binds directly to 23S rRNA. Probably involved in E site tRNA release. Functionally, protein L1 is also a translational repressor protein, it controls the translation of its operon by binding to its mRNA. In Methanosarcina mazei (strain ATCC BAA-159 / DSM 3647 / Goe1 / Go1 / JCM 11833 / OCM 88) (Methanosarcina frisia), this protein is Large ribosomal subunit protein uL1.